Reading from the N-terminus, the 134-residue chain is Ribonuclease VapC11 (134 aa).

Positions 2–126 (ILIDTSAWVE…ADFDVIARIT (125 aa)) constitute a PINc domain. Mg(2+) contacts are provided by Asp-5 and Asp-98.

Belongs to the PINc/VapC protein family. Mg(2+) serves as cofactor.

Toxic component of a type II toxin-antitoxin (TA) system. Acts as an RNase. Its toxic effects on cell growth and colony formation are neutralized by coexpression with cognate antitoxin VapB11. This Mycobacterium tuberculosis (strain CDC 1551 / Oshkosh) protein is Ribonuclease VapC11.